The primary structure comprises 182 residues: Plasmolipin (182 aa).

The Cytoplasmic portion of the chain corresponds to 1-35; that stretch reads MAEFPSKVSTRTSSPAQGAEASVSALRPDLGFVRS. At S9 the chain carries Phosphoserine. Residues 32–166 enclose the MARVEL domain; it reads FVRSRLGALM…SAFFSYQAWR (135 aa). The chain crosses the membrane as a helical span at residues 36-56; that stretch reads RLGALMLLQLVLGLLVWALIA. Residues 57–68 lie on the Extracellular side of the membrane; the sequence is DTPYHLYPAYGW. Residues 69 to 89 traverse the membrane as a helical segment; sequence VMFVAVFLWLVTIVLFNLYLF. At 90-99 the chain is on the cytoplasmic side; it reads QLHMKLYMVP. A helical membrane pass occupies residues 100–120; sequence WPLVLMIFNISATVLYITAFI. The Extracellular portion of the chain corresponds to 121-141; it reads ACSAAVDLTSLRGTRPYNQRA. The helical transmembrane segment at 142–162 threads the bilayer; the sequence is AASFFACLVMIAYGVSAFFSY. Topologically, residues 163 to 182 are cytoplasmic; that stretch reads QAWRGVGSNAATSQMAGGYA.

The protein belongs to the MAL family. In terms of assembly, forms oligomers. In terms of processing, phosphorylated.

It is found in the cell membrane. Its subcellular location is the myelin membrane. The protein localises to the apical cell membrane. The protein resides in the golgi apparatus. In terms of biological role, main component of the myelin sheath that plays an important role in myelin membrane biogenesis and myelination. Plays an essential function in apical endocytosis. Regulates epithelial development through the regulation of apical endocytosis. Part of the intracellular machinery that mediates basolateral-to-apical transport of ICAM-1, an essential adhesion receptor in epithelial cells, from the subapical compartment in hepatic epithelial cells. The polypeptide is Plasmolipin (Homo sapiens (Human)).